We begin with the raw amino-acid sequence, 91 residues long: Probable Fe(2+)-trafficking protein (91 aa).

This sequence belongs to the Fe(2+)-trafficking protein family.

In terms of biological role, could be a mediator in iron transactions between iron acquisition and iron-requiring processes, such as synthesis and/or repair of Fe-S clusters in biosynthetic enzymes. In Acidobacterium capsulatum (strain ATCC 51196 / DSM 11244 / BCRC 80197 / JCM 7670 / NBRC 15755 / NCIMB 13165 / 161), this protein is Probable Fe(2+)-trafficking protein.